The primary structure comprises 91 residues: Metalloproteinase inhibitor 2 (91 aa).

The NTR domain maps to 1–91 (KAVSEKEVDS…FIVPWDTLST (91 aa)).

This sequence belongs to the protease inhibitor I35 (TIMP) family. In terms of processing, the activity of TIMP2 is dependent on the presence of disulfide bonds.

The protein resides in the secreted. Functionally, complexes with metalloproteinases (such as collagenases) and irreversibly inactivates them. In Equus caballus (Horse), this protein is Metalloproteinase inhibitor 2 (TIMP2).